We begin with the raw amino-acid sequence, 193 residues long: Protein Syd (193 aa).

It belongs to the Syd family.

It localises to the cell inner membrane. Its function is as follows. Interacts with the SecY protein in vivo. May bind preferentially to an uncomplexed state of SecY, thus functioning either as a chelating agent for excess SecY in the cell or as a regulatory factor that negatively controls the translocase function. The chain is Protein Syd from Tolumonas auensis (strain DSM 9187 / NBRC 110442 / TA 4).